We begin with the raw amino-acid sequence, 525 residues long: ATP synthase subunit alpha (525 aa).

Residue 169–176 (GDRQTGKT) coordinates ATP.

The protein belongs to the ATPase alpha/beta chains family. In terms of assembly, F-type ATPases have 2 components, CF(1) - the catalytic core - and CF(0) - the membrane proton channel. CF(1) has five subunits: alpha(3), beta(3), gamma(1), delta(1), epsilon(1). CF(0) has three main subunits: a(1), b(2) and c(9-12). The alpha and beta chains form an alternating ring which encloses part of the gamma chain. CF(1) is attached to CF(0) by a central stalk formed by the gamma and epsilon chains, while a peripheral stalk is formed by the delta and b chains.

Its subcellular location is the cell membrane. It catalyses the reaction ATP + H2O + 4 H(+)(in) = ADP + phosphate + 5 H(+)(out). Its function is as follows. Produces ATP from ADP in the presence of a proton gradient across the membrane. The alpha chain is a regulatory subunit. The sequence is that of ATP synthase subunit alpha from Mycoplasma capricolum subsp. capricolum (strain California kid / ATCC 27343 / NCTC 10154).